We begin with the raw amino-acid sequence, 70 residues long: Large ribosomal subunit protein bL31 (70 aa).

4 residues coordinate Zn(2+): cysteine 16, cysteine 18, cysteine 38, and cysteine 41.

This sequence belongs to the bacterial ribosomal protein bL31 family. Type A subfamily. Part of the 50S ribosomal subunit. Zn(2+) serves as cofactor.

Binds the 23S rRNA. In Vesicomyosocius okutanii subsp. Calyptogena okutanii (strain HA), this protein is Large ribosomal subunit protein bL31.